A 354-amino-acid chain; its full sequence is UPF0283 membrane protein CGSHiGG_02710 (354 aa).

3 helical membrane passes run 57 to 77 (LLKF…VQWI), 87 to 107 (IYLA…KEII), and 211 to 231 (ESAV…FIAW).

This sequence belongs to the UPF0283 family.

It is found in the cell inner membrane. The sequence is that of UPF0283 membrane protein CGSHiGG_02710 from Haemophilus influenzae (strain PittGG).